The following is a 288-amino-acid chain: HTH-type transcriptional regulator CzcR (288 aa).

In terms of domain architecture, HTH lysR-type spans 1-58 (MELRDLQIFQSVADQGSVSSAAKELNYVQSNVTTRIKQLENELKTPLFYRHKRGMTLT). The segment at residues 18-37 (VSSAAKELNYVQSNVTTRIK) is a DNA-binding region (H-T-H motif).

It belongs to the LysR transcriptional regulatory family.

This chain is HTH-type transcriptional regulator CzcR (czcR), found in Bacillus thuringiensis subsp. konkukian (strain 97-27).